A 78-amino-acid polypeptide reads, in one-letter code: Small ribosomal subunit protein uS17 (78 aa).

Belongs to the universal ribosomal protein uS17 family. As to quaternary structure, part of the 30S ribosomal subunit.

One of the primary rRNA binding proteins, it binds specifically to the 5'-end of 16S ribosomal RNA. In Wolbachia pipientis wMel, this protein is Small ribosomal subunit protein uS17.